We begin with the raw amino-acid sequence, 343 residues long: NAC domain-containing protein 4 (343 aa).

The NAC domain maps to 12-168 (LPPGFRFHPT…EWVLCRVFKK (157 aa)). A DNA-binding region spans residues 109 to 174 (VGMKKTLVFY…VFKKSLVEVG (66 aa)). The tract at residues 304–333 (GGERERLSASQDTGLTSDVNPEISSSSGQK) is disordered. Positions 311–332 (SASQDTGLTSDVNPEISSSSGQ) are enriched in polar residues.

In terms of tissue distribution, expressed in roots, tiller buds, stems, leaves, lamina joints and the young husks. Expressed in embryos, coleoptiles, radicles, leaf pulvinus, ligules, panicles, palea and lemma, anthers, and the internode of the peduncles. Expressed in young leaves, root meristems, florescence meristems and young spikelets.

The protein localises to the nucleus. Transcription factor involved in the regulation of tiller bud outgrowth, but does not seem to regulate tiller bud initiation. Possesses transactivation activity in yeast. Involved in the regulation of plant architecture and grain yield. Acts as a negative regulator of plant height and flowering time. Regulates directly key genes of the gibberellin (GA) pathway by binding to their promoters. Positively regulates leaf senescence in an age-dependent manner. Activates directly the expression of the chlorophyll degradation genes SGR and NYC3. Positively regulates the level of abscisic acid (ABA) by directly up-regulating the expression of the ABA biosynthetic genes NCED3 and ZEP, and down-regulating the ABA catabolic gene CYP707A5/ABA8OX1. Promotes salt-induced cell death accompanied by the loss of plasma membrane integrity, nuclear DNA fragmentation, and changes of caspase-like activity. Targets genes that encoded a reactive oxygen species (ROS) scavenger COX11 and a caspase-like protease AP37. Activates the potassium efflux channels GORK and SKOR. Acts as a positive regulator of drought and salt tolerance through ABA-mediated pathways. Acts as a negative regulator of root growth. Functions as an upstream integrator of auxin and cytokinin signals that affect CROWN ROOTLESS (CRL) and cyclin-dependent protein kinase (CDK) genes to regulate cell division during root development. Binds directly to the promoters of the auxin inactivation-related genes GH3.6 and GH3.8, the auxin signaling-related gene ARF25, and the cytokinin oxidase gene CKX4. Activates directly the expressions of the 1-aminocyclopropane-1-carboxylate oxidase genes ACO1 and ACO3, enhancing ethylene synthesis, and then retarding seedling establishment. The protein is NAC domain-containing protein 4 of Oryza sativa subsp. japonica (Rice).